A 620-amino-acid chain; its full sequence is Cell fusion protein cfr1 (620 aa).

The 91-residue stretch at 79 to 169 (LPSPPVLKLK…KHITIKTLRM (91 aa)) folds into the Fibronectin type-III domain. Residues 167–256 (LRMIDLTGIQ…RLVNVSGFYI (90 aa)) enclose the BRCT domain. Disordered regions lie at residues 287–566 (QPKN…PEKA) and 588–620 (KQSSEPTADDNLIPNKEAEIIQSSDEFESVNID). The segment covering 303–314 (APQQTTQQGTQN) has biased composition (polar residues). The segment covering 315–330 (SANAEPSSSASVPAEA) has biased composition (low complexity). Residues 352-375 (SKPNEAPTSSENIKADQPENSTKQ) are compositionally biased toward polar residues. Basic and acidic residues predominate over residues 382–392 (MQIKDAEEHSN). The segment covering 393-406 (LESTPAAQQTSEVE) has biased composition (polar residues). Positions 424-434 (NVNEENNTPET) are enriched in low complexity. A compositionally biased stretch (polar residues) spans 445–468 (NTAAESLINQEETTSGEAVTKSTV). Positions 472 to 484 (ANEEEAEPNEIIE) are enriched in acidic residues. The span at 506–515 (NNANSENANG) shows a compositional bias: polar residues. The segment covering 517–537 (TDEKIIEAPLDTKENSDDDKP) has biased composition (basic and acidic residues).

This sequence belongs to the CHS5 family.

Its subcellular location is the golgi apparatus. Required for cell fusion, independently of fus1. Appears to have a role in transporting proteins that are involved in mating. May act as a scaffold to retain cell fusion proteins in the cisternae of the Golgi. Degraded at the onset of mating and this leads to release of cell fusion proteins. This Schizosaccharomyces pombe (strain 972 / ATCC 24843) (Fission yeast) protein is Cell fusion protein cfr1 (cfr1).